We begin with the raw amino-acid sequence, 431 residues long: MGKNVVVLGTQWGDEGKGKIVDLLTEQAKYVVRYQGGHNAGHTLVINGDKTVLHLIPSGILRDNVKCIIGNGVVVAPDALLKEINMLKERGVPVEERLLISEACPLILPFHCALDIAREKARGNKAIGTTGRGIGPAYEDKVSRRGLRIGDLFNAELFATKLAEVMKYHNFMLTEYYKVEAVDYQKTLDDALAIADYLKSMCTDVTELLDTARKAGEPIMFEGAQGTLLDIDHGTYPFVTSSNTTAGGVATGSGFGPRHLDYVLGIMKAYTTRVGAGPFPTELSCEIGDYIGHKGQEFGATTGRKRRPGWLDAVAMRRAVQINSVSGFCLTKLDVLDGLEEVKICVGYQYPDGTVETVTPLAAEGYEEVTPVYETMPGWSDITFGATSIEQLPAAAIAYIKRIEELLETPIDIISTGPDRNETMILVNPFN.

Residues 13–19 (GDEGKGK) and 41–43 (GHT) contribute to the GTP site. The active-site Proton acceptor is Asp14. Positions 14 and 41 each coordinate Mg(2+). Residues 14–17 (DEGK), 39–42 (NAGH), Thr130, Arg144, Gln225, Thr240, and Arg304 each bind IMP. His42 serves as the catalytic Proton donor. A substrate-binding site is contributed by 300 to 306 (ATTGRKR). Residues Arg306, 332 to 334 (KLD), and 415 to 417 (STG) each bind GTP.

The protein belongs to the adenylosuccinate synthetase family. Homodimer. The cofactor is Mg(2+).

It is found in the cytoplasm. It carries out the reaction IMP + L-aspartate + GTP = N(6)-(1,2-dicarboxyethyl)-AMP + GDP + phosphate + 2 H(+). It functions in the pathway purine metabolism; AMP biosynthesis via de novo pathway; AMP from IMP: step 1/2. Its function is as follows. Plays an important role in the de novo pathway of purine nucleotide biosynthesis. Catalyzes the first committed step in the biosynthesis of AMP from IMP. The protein is Adenylosuccinate synthetase of Shewanella denitrificans (strain OS217 / ATCC BAA-1090 / DSM 15013).